Reading from the N-terminus, the 141-residue chain is Nucleoside diphosphate kinase (141 aa).

K11, F59, R87, T93, R104, and N114 together coordinate ATP. The Pros-phosphohistidine intermediate role is filled by H117.

The protein belongs to the NDK family. The cofactor is Mg(2+).

The protein resides in the cytoplasm. It catalyses the reaction a 2'-deoxyribonucleoside 5'-diphosphate + ATP = a 2'-deoxyribonucleoside 5'-triphosphate + ADP. The enzyme catalyses a ribonucleoside 5'-diphosphate + ATP = a ribonucleoside 5'-triphosphate + ADP. Functionally, major role in the synthesis of nucleoside triphosphates other than ATP. The ATP gamma phosphate is transferred to the NDP beta phosphate via a ping-pong mechanism, using a phosphorylated active-site intermediate. In Staphylothermus marinus (strain ATCC 43588 / DSM 3639 / JCM 9404 / F1), this protein is Nucleoside diphosphate kinase.